The following is a 414-amino-acid chain: ORC1-type DNA replication protein 1 (414 aa).

ATP contacts are provided by residues 70-74 (TGKTA), Tyr-213, and Arg-225.

The protein belongs to the CDC6/cdc18 family.

Its function is as follows. Involved in regulation of DNA replication. In Methanosarcina acetivorans (strain ATCC 35395 / DSM 2834 / JCM 12185 / C2A), this protein is ORC1-type DNA replication protein 1 (cdc6-1).